Reading from the N-terminus, the 217-residue chain is MAAGSRTSLLLAFGLLCLSWLQEGSAFPTIPLSRLFDNAMLRARRLYQLAYDTYQEFEEAYILKEQKYSFLQNPQTSLCFSESIPTPSNRVKTQQKSNLELLRISLLLIQSWLEPVQLLRSVFANSLVYGASDSNVYRHLKDLEEGIQTLMWRLEDGSPRTGQIFNQSYSKFDTKSHNDDALLKNYGLLYCFRKDMDKVETFLRIVQCRSVEGSCGF.

The N-terminal stretch at 1–26 is a signal peptide; that stretch reads MAAGSRTSLLLAFGLLCLSWLQEGSA. Disulfide bonds link Cys-79–Cys-191 and Cys-208–Cys-215. Residue Ser-132 is modified to Phosphoserine. A glycan (N-linked (GlcNAc...) asparagine) is linked at Asn-166. Position 176 is a phosphoserine (Ser-176).

Belongs to the somatotropin/prolactin family. As to quaternary structure, monomer, dimer, trimer, tetramer and pentamer, disulfide-linked or non-covalently associated, in homomeric and heteromeric combinations. Can also form a complex either with GHBP or with the alpha2-macroglobulin complex. In terms of tissue distribution, expressed in the placenta.

The protein localises to the secreted. Plays an important role in growth control. Its major role in stimulating body growth is to stimulate the liver and other tissues to secrete IGF1. It stimulates both the differentiation and proliferation of myoblasts. It also stimulates amino acid uptake and protein synthesis in muscle and other tissues. The sequence is that of Growth hormone variant (GH2) from Homo sapiens (Human).